Here is a 359-residue protein sequence, read N- to C-terminus: Cytohesin-interacting protein (359 aa).

The PDZ domain occupies 77–166 (VVTVEKQDNG…LLTIETLNGT (90 aa)). Residues 165-188 (GTMIHRRAELEAKLQTLKQTLKKK) adopt a coiled-coil conformation. An interaction with CYTH1 region spans residues 166-188 (TMIHRRAELEAKLQTLKQTLKKK).

As to quaternary structure, interacts with CYTH1 and SNX27.

It localises to the cytoplasm. The protein localises to the early endosome. In terms of biological role, by its binding to cytohesin-1 (CYTH1), it modifies activation of ARFs by CYTH1 and its precise function may be to sequester CYTH1 in the cytoplasm. In Mus musculus (Mouse), this protein is Cytohesin-interacting protein (Cytip).